The chain runs to 248 residues: 3-deoxy-manno-octulosonate cytidylyltransferase (248 aa).

The protein belongs to the KdsB family.

The protein localises to the cytoplasm. It carries out the reaction 3-deoxy-alpha-D-manno-oct-2-ulosonate + CTP = CMP-3-deoxy-beta-D-manno-octulosonate + diphosphate. It participates in nucleotide-sugar biosynthesis; CMP-3-deoxy-D-manno-octulosonate biosynthesis; CMP-3-deoxy-D-manno-octulosonate from 3-deoxy-D-manno-octulosonate and CTP: step 1/1. The protein operates within bacterial outer membrane biogenesis; lipopolysaccharide biosynthesis. Its function is as follows. Activates KDO (a required 8-carbon sugar) for incorporation into bacterial lipopolysaccharide in Gram-negative bacteria. This is 3-deoxy-manno-octulosonate cytidylyltransferase from Chlorobium phaeobacteroides (strain BS1).